A 328-amino-acid chain; its full sequence is UPF0421 protein SAR1980 (328 aa).

4 consecutive transmembrane segments (helical) span residues 19–39 (IAIF…IYAI), 61–81 (LPAT…FGDQ), 108–128 (VAVL…IFNF), and 132–152 (TLTA…VFPP).

Belongs to the UPF0421 family.

The protein resides in the cell membrane. The chain is UPF0421 protein SAR1980 from Staphylococcus aureus (strain MRSA252).